The sequence spans 296 residues: MTIELLDSMGVVDTSNAYIRKAVAAPASDVLGRIANLETRLARSAAEIDAAQAVRYRVFVEEMKAQVAPEAGRRKRDIDSWDAICDHLLVLDTSIEGDAEEQIVGTYRLLRQDVAERTGGFYSASEFAIGELLSRHPGKRFMELGRSCVLPEYRTKRTVELLWQGNWAYALKHGIDAMFGCGSFPGVVPEEHALALSFLHHNVRVRDEWAVSARPELYRTMDLMPPEAINPKKALAALPPLIKGYMRLGAMVGDGAVVDQAFRTTDVLIVLPIGKISGRYLNYYGADAGRFSSPVS.

It belongs to the acetyltransferase family. OlsB subfamily.

The enzyme catalyses a (3R)-hydroxyacyl-[ACP] + L-ornithine = a lyso-ornithine lipid + holo-[ACP] + H(+). Its pathway is lipid metabolism. In terms of biological role, catalyzes the first step in the biosynthesis of ornithine lipids, which are phosphorus-free membrane lipids. Catalyzes the 3-hydroxyacyl-acyl carrier protein-dependent acylation of ornithine to form lyso-ornithine lipid (LOL). The chain is L-ornithine N(alpha)-acyltransferase from Rhizobium meliloti (strain 1021) (Ensifer meliloti).